A 199-amino-acid polypeptide reads, in one-letter code: Probable molybdenum cofactor guanylyltransferase (199 aa).

GTP-binding positions include 6–8 (LAG), lysine 18, aspartate 65, and aspartate 97. Aspartate 97 is a binding site for Mg(2+).

The protein belongs to the MobA family. Requires Mg(2+) as cofactor.

It localises to the cytoplasm. The catalysed reaction is Mo-molybdopterin + GTP + H(+) = Mo-molybdopterin guanine dinucleotide + diphosphate. Transfers a GMP moiety from GTP to Mo-molybdopterin (Mo-MPT) cofactor (Moco or molybdenum cofactor) to form Mo-molybdopterin guanine dinucleotide (Mo-MGD) cofactor. The polypeptide is Probable molybdenum cofactor guanylyltransferase (Staphylococcus aureus (strain Mu50 / ATCC 700699)).